Consider the following 185-residue polypeptide: Elongation factor P (185 aa).

The protein belongs to the elongation factor P family.

The protein resides in the cytoplasm. It participates in protein biosynthesis; polypeptide chain elongation. Involved in peptide bond synthesis. Stimulates efficient translation and peptide-bond synthesis on native or reconstituted 70S ribosomes in vitro. Probably functions indirectly by altering the affinity of the ribosome for aminoacyl-tRNA, thus increasing their reactivity as acceptors for peptidyl transferase. The polypeptide is Elongation factor P (Clostridioides difficile (strain 630) (Peptoclostridium difficile)).